The following is a 435-amino-acid chain: 5-hydroxybenzimidazole synthase (435 aa).

Residues M95, Y124, H163, S186–G188, N227–R230, and E266 each bind substrate. Residue H270 participates in Zn(2+) binding. Substrate is bound at residue Y293. Residue H334 coordinates Zn(2+). [4Fe-4S] cluster contacts are provided by C410, C413, and C417.

The protein belongs to the ThiC family. 5-hydroxybenzimidazole synthase subfamily. Homodimer. It depends on [4Fe-4S] cluster as a cofactor.

The enzyme catalyses 5-amino-1-(5-phospho-beta-D-ribosyl)imidazole + AH2 + S-adenosyl-L-methionine = 5-hydroxybenzimidazole + 5'-deoxyadenosine + formate + L-methionine + A + NH4(+) + phosphate + 2 H(+). The protein operates within cofactor biosynthesis; adenosylcobalamin biosynthesis. Functionally, catalyzes the complex conversion of aminoimidazole ribotide (AIR) to 5-hydroxybenzimidazole (5-HBI) in a radical S-adenosyl-L-methionine (SAM)-dependent reaction. Is thus involved in the anaerobic biosynthesis of dimethylbenzimidazole (DMB), the lower axial ligand of vitamin B12 (cobalamin). The sequence is that of 5-hydroxybenzimidazole synthase from Desulfuromonas acetoxidans (strain DSM 684 / 11070).